A 142-amino-acid polypeptide reads, in one-letter code: Mediator of RNA polymerase II transcription subunit 21 (142 aa).

Positions 87–131 form a coiled coil; it reads AEEQLSRIDSLQKKLIQVEGEKIEAIKRKESLTKDIEELINEFTE.

This sequence belongs to the Mediator complex subunit 21 family. Component of the Mediator complex.

It is found in the nucleus. Its function is as follows. Component of the Mediator complex, a coactivator involved in the regulated transcription of nearly all RNA polymerase II-dependent genes. Mediator functions as a bridge to convey information from gene-specific regulatory proteins to the basal RNA polymerase II transcription machinery. Mediator is recruited to promoters by direct interactions with regulatory proteins and serves as a scaffold for the assembly of a functional preinitiation complex with RNA polymerase II and the general transcription factors. The chain is Mediator of RNA polymerase II transcription subunit 21 (SRB7) from Eremothecium gossypii (strain ATCC 10895 / CBS 109.51 / FGSC 9923 / NRRL Y-1056) (Yeast).